Consider the following 648-residue polypeptide: Transmembrane 9 superfamily member 8 (648 aa).

An N-terminal signal peptide occupies residues 1-33 (MAMEFLRSSRRILESSGCAIALIFLLFIHGAHS). Over 34–285 (FYLPGVAPQD…YLLMSDNQIH (252 aa)) the chain is Lumenal. The helical transmembrane segment at 286 to 306 (WFSIVNSLMIVLFLSGMVAMI) threads the bilayer. Residues 307-355 (MLRTLYRDISRYNELETQEEAQEETGWKLVHGDVFRLPTNSDLLCVYVG) are Cytoplasmic-facing. Residues 356 to 376 (TGVQCLGMVFVTMIFAMLGFL) traverse the membrane as a helical segment. The Lumenal portion of the chain corresponds to 377–381 (SPSNR). Residues 382 to 402 (GGLMTAMLLLWVFMGLFAGYA) traverse the membrane as a helical segment. Residues 403-422 (SSRLYKMFKGTEWKRIAFRT) are Cytoplasmic-facing. A helical membrane pass occupies residues 423-443 (AFLFPAVVSAIFFVLNALIWG). Residues 444–455 (QKSSGAVPFGTM) lie on the Lumenal side of the membrane. Residues 456–476 (FALIFLWFGISVPLVFVGGYI) traverse the membrane as a helical segment. The Cytoplasmic portion of the chain corresponds to 477-506 (GFKKPAADDPVKTNKIPRQIPEQAWYMNPV). A helical membrane pass occupies residues 507 to 527 (FSILIGGILPFGAVFIELFFI). Residues 528 to 538 (LTSIWLNQFYY) lie on the Lumenal side of the membrane. The chain crosses the membrane as a helical span at residues 539–559 (IFGFLFLVFVILIVTCAEITV). The Cytoplasmic portion of the chain corresponds to 560-577 (VLCYFQLCSEDYLWWWRS). A helical transmembrane segment spans residues 578 to 598 (YLTSGSSALYLFLYATFYFFT). Topologically, residues 599–604 (KLQITK) are lumenal. A helical transmembrane segment spans residues 605–625 (LVSAMLYFGYMLIASYAFFVL). Topologically, residues 626–648 (TGTIGFYACLWFTRLIYSSVKID) are cytoplasmic. The Endoplasmic reticulum export signal signature appears at 637–642 (FTRLIY). Positions 646–648 (KID) match the Golgi retention signal motif.

This sequence belongs to the nonaspanin (TM9SF) (TC 9.A.2) family.

Its subcellular location is the endosome membrane. The protein resides in the golgi apparatus membrane. This is Transmembrane 9 superfamily member 8 from Arabidopsis thaliana (Mouse-ear cress).